The following is a 471-amino-acid chain: Cytochrome b-c1 complex subunit 1, mitochondrial (471 aa).

This sequence belongs to the peptidase M16 family.

The protein localises to the mitochondrion matrix. In Caenorhabditis elegans, this protein is Cytochrome b-c1 complex subunit 1, mitochondrial (ucr-1).